Reading from the N-terminus, the 122-residue chain is Large ribosomal subunit protein uL14 (122 aa).

The protein belongs to the universal ribosomal protein uL14 family. In terms of assembly, part of the 50S ribosomal subunit. Forms a cluster with proteins L3 and L19. In the 70S ribosome, L14 and L19 interact and together make contacts with the 16S rRNA in bridges B5 and B8.

Its function is as follows. Binds to 23S rRNA. Forms part of two intersubunit bridges in the 70S ribosome. The sequence is that of Large ribosomal subunit protein uL14 from Chlorobium luteolum (strain DSM 273 / BCRC 81028 / 2530) (Pelodictyon luteolum).